We begin with the raw amino-acid sequence, 248 residues long: Exosome complex component Rrp41 (248 aa).

The protein belongs to the RNase PH family. Rrp41 subfamily. As to quaternary structure, component of the archaeal exosome complex. Forms a hexameric ring-like arrangement composed of 3 Rrp41-Rrp42 heterodimers. The hexameric ring associates with a trimer of Rrp4 and/or Csl4 subunits.

It is found in the cytoplasm. Functionally, catalytic component of the exosome, which is a complex involved in RNA degradation. Has 3'-&gt;5' exoribonuclease activity. Can also synthesize heteromeric RNA-tails. This is Exosome complex component Rrp41 from Thermoplasma acidophilum (strain ATCC 25905 / DSM 1728 / JCM 9062 / NBRC 15155 / AMRC-C165).